Here is a 506-residue protein sequence, read N- to C-terminus: Kynureninase 1 (506 aa).

Pyridoxal 5'-phosphate-binding positions include leucine 141, threonine 142, 169–172 (FPSD), aspartate 254, histidine 257, and tyrosine 279. Lysine 280 is subject to N6-(pyridoxal phosphate)lysine. The segment covering 303 to 319 (ETAPTTTPDGTNGNPKT) has biased composition (low complexity). The interval 303-322 (ETAPTTTPDGTNGNPKTISD) is disordered. Residues tryptophan 334 and asparagine 362 each coordinate pyridoxal 5'-phosphate.

This sequence belongs to the kynureninase family. As to quaternary structure, homodimer. It depends on pyridoxal 5'-phosphate as a cofactor.

The protein localises to the cytoplasm. It catalyses the reaction L-kynurenine + H2O = anthranilate + L-alanine + H(+). The catalysed reaction is 3-hydroxy-L-kynurenine + H2O = 3-hydroxyanthranilate + L-alanine + H(+). The protein operates within amino-acid degradation; L-kynurenine degradation; L-alanine and anthranilate from L-kynurenine: step 1/1. It functions in the pathway cofactor biosynthesis; NAD(+) biosynthesis; quinolinate from L-kynurenine: step 2/3. In terms of biological role, catalyzes the cleavage of L-kynurenine (L-Kyn) and L-3-hydroxykynurenine (L-3OHKyn) into anthranilic acid (AA) and 3-hydroxyanthranilic acid (3-OHAA), respectively. The chain is Kynureninase 1 from Phaeosphaeria nodorum (strain SN15 / ATCC MYA-4574 / FGSC 10173) (Glume blotch fungus).